The following is a 160-amino-acid chain: uncharacterized protein (160 aa).

The N-terminal stretch at Met1–Ala27 is a signal peptide.

This is an uncharacterized protein from Aquifex aeolicus (strain VF5).